A 449-amino-acid polypeptide reads, in one-letter code: Probable mitochondrial chaperone bcs1 (449 aa).

Residues 1–20 (MDNIGAADAATSSGISGLLS) are Mitochondrial intermembrane-facing. Residues 21-41 (GNSFLGAGIGLMGFGAGLAIL) form a helical membrane-spanning segment. The Mitochondrial matrix segment spans residues 42-449 (RRGLISGASL…FNVHRKSLSV (408 aa)). Position 249 to 256 (249 to 256 (GPPGSGKT)) interacts with ATP.

This sequence belongs to the AAA ATPase family. BCS1 subfamily.

The protein localises to the mitochondrion inner membrane. It catalyses the reaction ATP + H2O = ADP + phosphate + H(+). Its function is as follows. Chaperone necessary for the incorporation of Rieske iron-sulfur protein rip1 into the mitochondrial respiratory chain complex III. This chain is Probable mitochondrial chaperone bcs1, found in Schizosaccharomyces pombe (strain 972 / ATCC 24843) (Fission yeast).